A 91-amino-acid chain; its full sequence is Alpha-defensin-related sequence 12 (91 aa).

A signal peptide spans 1 to 19 (MKKLVLLSAFVLLAFQVQA). A propeptide spanning residues 20–65 (DSIQNTDEEIKTEEQPGEENQAVSISFGDPEGYALQDAAIRRARRC) is cleaved from the precursor. A run of 6 repeats spans residues 65-67 (CPP), 68-70 (CPS), 71-73 (CLS), 74-76 (CPW), 77-79 (CPR), and 83-85 (CPM). The 6 X 3 AA tandem repeats of C-P-X stretch occupies residues 65–88 (CPPCPSCLSCPWCPRCLRCPMCKC).

This sequence belongs to the alpha-defensin family. In terms of tissue distribution, paneth cells of the small bowel.

The protein resides in the secreted. Functionally, apparent precursor of a secreted, cationic, proline- and cysteine-rich peptide that contains Cys-Pro-Xaa repeats. Unlike cryptdin, the proposed mature peptide region lacks the structural motif characteristic of defensins. It may have microbicidal activities. In Mus musculus (Mouse), this protein is Alpha-defensin-related sequence 12 (Defa-rs12).